A 215-amino-acid polypeptide reads, in one-letter code: 2-dehydro-3-deoxy-phosphogluconate aldolase (215 aa).

Residue Glu46 is the Proton acceptor of the active site. Positions 50, 74, and 134 each coordinate pyruvate. Residue Lys134 is the Schiff-base intermediate with substrate of the active site.

This sequence belongs to the KHG/KDPG aldolase family. In terms of assembly, homotrimer.

It carries out the reaction 2-dehydro-3-deoxy-6-phospho-D-gluconate = D-glyceraldehyde 3-phosphate + pyruvate. It participates in carbohydrate acid metabolism; 2-dehydro-3-deoxy-D-gluconate degradation; D-glyceraldehyde 3-phosphate and pyruvate from 2-dehydro-3-deoxy-D-gluconate: step 2/2. In terms of biological role, involved in the degradation of glucose via the Entner-Doudoroff pathway. Catalyzes the reversible, stereospecific retro-aldol cleavage of 2-keto-3-deoxy-6-phosphogluconate (KDPG) to pyruvate and D-glyceraldehyde-3-phosphate. Involved in the degradation of 3,6-anhydro-L-galactose (L-AnG), which is the major monomeric sugar of red macroalgae. The cleavage of KDPG to glyceraldehyde 3-phosphate and pyruvate is the sixth step of this pathway. In Pseudoalteromonas atlantica (strain T6c / ATCC BAA-1087), this protein is 2-dehydro-3-deoxy-phosphogluconate aldolase.